The chain runs to 475 residues: Glycogen synthase (475 aa).

Residue Lys-15 coordinates ADP-alpha-D-glucose.

The protein belongs to the glycosyltransferase 1 family. Bacterial/plant glycogen synthase subfamily.

The enzyme catalyses [(1-&gt;4)-alpha-D-glucosyl](n) + ADP-alpha-D-glucose = [(1-&gt;4)-alpha-D-glucosyl](n+1) + ADP + H(+). The protein operates within glycan biosynthesis; glycogen biosynthesis. Synthesizes alpha-1,4-glucan chains using ADP-glucose. The protein is Glycogen synthase of Chlamydia felis (strain Fe/C-56) (Chlamydophila felis).